We begin with the raw amino-acid sequence, 63 residues long: Small ribosomal subunit protein eS17 (63 aa).

Belongs to the eukaryotic ribosomal protein eS17 family.

The sequence is that of Small ribosomal subunit protein eS17 from Methanosphaerula palustris (strain ATCC BAA-1556 / DSM 19958 / E1-9c).